Reading from the N-terminus, the 613-residue chain is Dihydroxy-acid dehydratase (613 aa).

D81 is a binding site for Mg(2+). Position 122 (C122) interacts with [2Fe-2S] cluster. Mg(2+) contacts are provided by D123 and K124. K124 is modified (N6-carboxylysine). C193 contacts [2Fe-2S] cluster. Residue E489 participates in Mg(2+) binding. Catalysis depends on S515, which acts as the Proton acceptor.

Belongs to the IlvD/Edd family. As to quaternary structure, homodimer. [2Fe-2S] cluster is required as a cofactor. Mg(2+) serves as cofactor.

It catalyses the reaction (2R)-2,3-dihydroxy-3-methylbutanoate = 3-methyl-2-oxobutanoate + H2O. The enzyme catalyses (2R,3R)-2,3-dihydroxy-3-methylpentanoate = (S)-3-methyl-2-oxopentanoate + H2O. It functions in the pathway amino-acid biosynthesis; L-isoleucine biosynthesis; L-isoleucine from 2-oxobutanoate: step 3/4. The protein operates within amino-acid biosynthesis; L-valine biosynthesis; L-valine from pyruvate: step 3/4. Functionally, functions in the biosynthesis of branched-chain amino acids. Catalyzes the dehydration of (2R,3R)-2,3-dihydroxy-3-methylpentanoate (2,3-dihydroxy-3-methylvalerate) into 2-oxo-3-methylpentanoate (2-oxo-3-methylvalerate) and of (2R)-2,3-dihydroxy-3-methylbutanoate (2,3-dihydroxyisovalerate) into 2-oxo-3-methylbutanoate (2-oxoisovalerate), the penultimate precursor to L-isoleucine and L-valine, respectively. This Pseudomonas putida (strain ATCC 700007 / DSM 6899 / JCM 31910 / BCRC 17059 / LMG 24140 / F1) protein is Dihydroxy-acid dehydratase.